The sequence spans 150 residues: Large ribosomal subunit protein uL15 (150 aa).

Residues 1-55 (MADNEILQMHDLKPAPGAKKDRTRVGRGEGSKGKTSGRGAKGQTKRNHVRPGFEG) are disordered. Residues 8 to 32 (QMHDLKPAPGAKKDRTRVGRGEGSK) show a composition bias toward basic and acidic residues.

It belongs to the universal ribosomal protein uL15 family. In terms of assembly, part of the 50S ribosomal subunit.

In terms of biological role, binds to the 23S rRNA. This Bifidobacterium longum (strain NCC 2705) protein is Large ribosomal subunit protein uL15.